The primary structure comprises 497 residues: Gasdermin-E (497 aa).

Residues 1–56 (MFAKATRSFLREVDAEGDLIAVSNLNDSDKSQLLSLVTKKKRFWCWQRPKYQFLSV) form a membrane targeting domain region. Cys45 is modified (S-(2-succinyl)cysteine). Residue Lys120 forms a Glycyl lysine isopeptide (Lys-Gly) (interchain with G-Cter in ubiquitin) linkage. S-(2-succinyl)cysteine is present on residues Cys156, Cys168, and Cys180. Lys189 participates in a covalent cross-link: Glycyl lysine isopeptide (Lys-Gly) (interchain with G-Cter in ubiquitin). 5 positions are modified to S-(2-succinyl)cysteine: Cys235, Cys371, Cys409, Cys418, and Cys491.

Belongs to the gasdermin family. As to quaternary structure, homooligomer; homooligomeric ring-shaped pore complex containing 27-28 subunits when inserted in the membrane. In terms of processing, cleavage at Asp-270 by CASP3 (mature and uncleaved precursor forms) or granzyme B (GZMB) relieves autoinhibition and is sufficient to initiate pyroptosis. Post-translationally, succination by the Krebs cycle intermediate fumarate, which leads to S-(2-succinyl)cysteine residues, inhibits processing by caspases, and ability to initiate pyroptosis. Succination modification is catalyzed by a non-enzymatic reaction caused by an accumulation of fumarate. Ubiquitinated on Lys-120 and Lys-189 via 'Lys-48'-linked polyubiquitin chains, leading to proteasomal degradation. Deubiquitinated by USP48, leading to increased stability. In terms of processing, palmitoylated.

Its subcellular location is the cell membrane. It is found in the cytoplasm. It localises to the cytosol. The full-length protein before cleavage is inactive: intramolecular interactions between N- and C-terminal domains mediate autoinhibition in the absence of activation signal. The intrinsic pyroptosis-inducing activity is carried by the released N-terminal moiety (Gasdermin-E, N-terminal) following cleavage by CASP3 or granzyme B (GZMB). Activated by NLRP1 in the absence of GSDMD expression: NLRP1 cleaves and activates CASP8, promoting downstream activation of CASP3 and subsequent activation of GSDME. Functionally, precursor of a pore-forming protein that converts non-inflammatory apoptosis to pyroptosis. This form constitutes the precursor of the pore-forming protein: upon cleavage, the released N-terminal moiety (Gasdermin-E, N-terminal) binds to membranes and forms pores, triggering pyroptosis. Pore-forming protein produced by cleavage by CASP3 or granzyme B (GZMB), which converts non-inflammatory apoptosis to pyroptosis or promotes granzyme-mediated pyroptosis, respectively. After cleavage, moves to the plasma membrane, homooligomerizes within the membrane and forms pores of 10-15 nanometers (nm) of inner diameter, allowing the release of mature interleukins (IL1B and IL16) and triggering pyroptosis. Binds to inner leaflet lipids, bisphosphorylated phosphatidylinositols, such as phosphatidylinositol (4,5)-bisphosphate. Cleavage by CASP3 switches CASP3-mediated apoptosis induced by TNF or danger signals, such as chemotherapy drugs, to pyroptosis. Mediates secondary necrosis downstream of the mitochondrial apoptotic pathway and CASP3 activation as well as in response to viral agents. Exhibits bactericidal activity. Cleavage by GZMB promotes tumor suppressor activity by triggering robust anti-tumor immunity. Suppresses tumors by mediating granzyme-mediated pyroptosis in target cells of natural killer (NK) cells: cleavage by granzyme B (GZMB), delivered to target cells from NK-cells, triggers pyroptosis of tumor cells and tumor suppression. May play a role in the p53/TP53-regulated cellular response to DNA damage. The protein is Gasdermin-E of Equus caballus (Horse).